The primary structure comprises 378 residues: Glutamate 5-kinase (378 aa).

Lys-20 is an ATP binding site. Residues Ser-60, Asp-147, and Asn-159 each coordinate substrate. Residues 179 to 180 and 221 to 227 each bind ATP; these read TD and TGGMLTK. One can recognise a PUA domain in the interval 286 to 364; it reads RGRVVLDAGA…SQIARILGSM (79 aa).

This sequence belongs to the glutamate 5-kinase family.

The protein localises to the cytoplasm. It catalyses the reaction L-glutamate + ATP = L-glutamyl 5-phosphate + ADP. It participates in amino-acid biosynthesis; L-proline biosynthesis; L-glutamate 5-semialdehyde from L-glutamate: step 1/2. In terms of biological role, catalyzes the transfer of a phosphate group to glutamate to form L-glutamate 5-phosphate. In Bordetella petrii (strain ATCC BAA-461 / DSM 12804 / CCUG 43448), this protein is Glutamate 5-kinase.